The sequence spans 120 residues: Large ribosomal subunit protein bL19 (120 aa).

Belongs to the bacterial ribosomal protein bL19 family.

In terms of biological role, this protein is located at the 30S-50S ribosomal subunit interface and may play a role in the structure and function of the aminoacyl-tRNA binding site. This Microcystis aeruginosa (strain NIES-843 / IAM M-2473) protein is Large ribosomal subunit protein bL19.